Consider the following 1072-residue polypeptide: Carbamoyl phosphate synthase large chain (1072 aa).

A carboxyphosphate synthetic domain region spans residues Met1–Glu401. ATP contacts are provided by Arg129, Arg169, Gly175, Gly176, Lys208, Ile210, Glu215, Gly241, Val242, His243, Gln284, and Glu298. One can recognise an ATP-grasp 1 domain in the interval Arg133–Val327. Residues Gln284, Glu298, and Asn300 each coordinate Mg(2+). 3 residues coordinate Mn(2+): Gln284, Glu298, and Asn300. The segment at Leu402–Ser546 is oligomerization domain. Residues Ile547–Gly929 are carbamoyl phosphate synthetic domain. The ATP-grasp 2 domain maps to Glu671–Leu861. The ATP site is built by Arg707, Arg746, Glu752, Gly777, Val778, His779, Ser780, Gln820, and Glu832. Gln820, Glu832, and Asn834 together coordinate Mg(2+). Gln820, Glu832, and Asn834 together coordinate Mn(2+). The 143-residue stretch at Ile930–Ala1072 folds into the MGS-like domain. The allosteric domain stretch occupies residues Ile930 to Ala1072.

It belongs to the CarB family. As to quaternary structure, composed of two chains; the small (or glutamine) chain promotes the hydrolysis of glutamine to ammonia, which is used by the large (or ammonia) chain to synthesize carbamoyl phosphate. Tetramer of heterodimers (alpha,beta)4. Mg(2+) is required as a cofactor. It depends on Mn(2+) as a cofactor.

It carries out the reaction hydrogencarbonate + L-glutamine + 2 ATP + H2O = carbamoyl phosphate + L-glutamate + 2 ADP + phosphate + 2 H(+). The enzyme catalyses hydrogencarbonate + NH4(+) + 2 ATP = carbamoyl phosphate + 2 ADP + phosphate + 2 H(+). It functions in the pathway amino-acid biosynthesis; L-arginine biosynthesis; carbamoyl phosphate from bicarbonate: step 1/1. Its pathway is pyrimidine metabolism; UMP biosynthesis via de novo pathway; (S)-dihydroorotate from bicarbonate: step 1/3. Large subunit of the glutamine-dependent carbamoyl phosphate synthetase (CPSase). CPSase catalyzes the formation of carbamoyl phosphate from the ammonia moiety of glutamine, carbonate, and phosphate donated by ATP, constituting the first step of 2 biosynthetic pathways, one leading to arginine and/or urea and the other to pyrimidine nucleotides. The large subunit (synthetase) binds the substrates ammonia (free or transferred from glutamine from the small subunit), hydrogencarbonate and ATP and carries out an ATP-coupled ligase reaction, activating hydrogencarbonate by forming carboxy phosphate which reacts with ammonia to form carbamoyl phosphate. The polypeptide is Carbamoyl phosphate synthase large chain (Bacillus cereus (strain AH187)).